The chain runs to 253 residues: Pimeloyl-[acyl-carrier protein] methyl ester esterase (253 aa).

Substrate contacts are provided by residues W18, 78–79, and 139–143; these read SL and FLALD. The Nucleophile role is filled by S78. Residues D203 and H231 contribute to the active site. H231 contributes to the substrate binding site.

Belongs to the AB hydrolase superfamily. Carboxylesterase BioH family. Monomer.

The protein resides in the cytoplasm. The catalysed reaction is 6-carboxyhexanoyl-[ACP] methyl ester + H2O = 6-carboxyhexanoyl-[ACP] + methanol + H(+). Its pathway is cofactor biosynthesis; biotin biosynthesis. Functionally, the physiological role of BioH is to remove the methyl group introduced by BioC when the pimeloyl moiety is complete. It allows to synthesize pimeloyl-ACP via the fatty acid synthetic pathway through the hydrolysis of the ester bonds of pimeloyl-ACP esters. The protein is Pimeloyl-[acyl-carrier protein] methyl ester esterase of Xanthomonas axonopodis pv. citri (strain 306).